Reading from the N-terminus, the 755-residue chain is Probable ubiquitin carboxyl-terminal hydrolase creB (755 aa).

Positions 1–32 (MGSFLRSLRRDVGPPTPSVGATPAKKEPPVPP) are disordered. The USP domain occupies 55–468 (FGMENYGNTC…CAYVLFYQET (414 aa)). The active-site Nucleophile is Cys64. 2 disordered regions span residues 119–146 (EKQK…DSPE) and 237–270 (EASK…TPNT). Over residues 237-246 (EASKQPEPER) the composition is skewed to basic and acidic residues. Positions 254–270 (ADSTELSGSSGSKTPNT) are enriched in polar residues. His419 functions as the Proton acceptor in the catalytic mechanism. The interval 495-755 (TLKQNGYPLS…LKKKSFSILS (261 aa)) is disordered. Residues 547–560 (ESSPADPSTTASAT) are compositionally biased toward low complexity. Residues 577–648 (KKSDSHFKKE…RRHSPDDTKK (72 aa)) are compositionally biased toward basic and acidic residues. Residues 581–630 (SHFKKERAKEEKERKANEKEKEKQRRRDQEARIREQRREDAEIRAALEAS) are a coiled coil. Basic residues predominate over residues 654 to 666 (SRLKRGSKSFSHR). Over residues 693 to 709 (NGASESQQQLPNGQSPG) the composition is skewed to polar residues. Residues 718–733 (TGLDEERDTLKDPKHD) are compositionally biased toward basic and acidic residues. Positions 734–755 (RSGHHGKWRSFSLKKKSFSILS) are enriched in basic residues.

This sequence belongs to the peptidase C19 family. As to quaternary structure, interacts with creA, creC and qutD.

The enzyme catalyses Thiol-dependent hydrolysis of ester, thioester, amide, peptide and isopeptide bonds formed by the C-terminal Gly of ubiquitin (a 76-residue protein attached to proteins as an intracellular targeting signal).. Its function is as follows. Ubiquitin thioesterase component of the regulatory network controlling carbon source utilization through ubiquitination and deubiquitination involving creA, creB, creC, creD and acrB. Deubiquitinates the creA catabolic repressor and the quinate permease qutD. Also plays a role in response to carbon starvation and the control of extracellular proteases activity. The sequence is that of Probable ubiquitin carboxyl-terminal hydrolase creB (creB) from Aspergillus flavus (strain ATCC 200026 / FGSC A1120 / IAM 13836 / NRRL 3357 / JCM 12722 / SRRC 167).